Consider the following 128-residue polypeptide: Iron-sulfur cluster insertion protein ErpA (128 aa).

Positions 56, 120, and 122 each coordinate iron-sulfur cluster.

This sequence belongs to the HesB/IscA family. Homodimer. Iron-sulfur cluster is required as a cofactor.

In terms of biological role, required for insertion of 4Fe-4S clusters for at least IspG. The polypeptide is Iron-sulfur cluster insertion protein ErpA (Xanthomonas oryzae pv. oryzae (strain MAFF 311018)).